We begin with the raw amino-acid sequence, 355 residues long: Chorismate synthase (355 aa).

The NADP(+) site is built by Arg44 and Arg49. Residues 121 to 123 (HFS), Gly277, 292 to 296 (KPTPS), and Arg319 contribute to the FMN site.

Belongs to the chorismate synthase family. It depends on FMNH2 as a cofactor.

The enzyme catalyses 5-O-(1-carboxyvinyl)-3-phosphoshikimate = chorismate + phosphate. It functions in the pathway metabolic intermediate biosynthesis; chorismate biosynthesis; chorismate from D-erythrose 4-phosphate and phosphoenolpyruvate: step 7/7. Its function is as follows. Catalyzes the anti-1,4-elimination of the C-3 phosphate and the C-6 proR hydrogen from 5-enolpyruvylshikimate-3-phosphate (EPSP) to yield chorismate, which is the branch point compound that serves as the starting substrate for the three terminal pathways of aromatic amino acid biosynthesis. This reaction introduces a second double bond into the aromatic ring system. The protein is Chorismate synthase of Thermococcus kodakarensis (strain ATCC BAA-918 / JCM 12380 / KOD1) (Pyrococcus kodakaraensis (strain KOD1)).